The primary structure comprises 525 residues: GMP synthase [glutamine-hydrolyzing] (525 aa).

Residues 8–207 enclose the Glutamine amidotransferase type-1 domain; sequence KILILDFGSQ…ALDICQCDAN (200 aa). Cys-85 serves as the catalytic Nucleophile. Residues His-181 and Glu-183 contribute to the active site. Residues 208 to 400 enclose the GMPS ATP-PPase domain; it reads WKPASIIEDA…LGLPYDMLYR (193 aa). 235–241 contacts ATP; the sequence is SGGVDSS.

Homodimer.

The catalysed reaction is XMP + L-glutamine + ATP + H2O = GMP + L-glutamate + AMP + diphosphate + 2 H(+). It functions in the pathway purine metabolism; GMP biosynthesis; GMP from XMP (L-Gln route): step 1/1. Functionally, catalyzes the synthesis of GMP from XMP. In Shewanella woodyi (strain ATCC 51908 / MS32), this protein is GMP synthase [glutamine-hydrolyzing].